The sequence spans 283 residues: 4-diphosphocytidyl-2-C-methyl-D-erythritol kinase (283 aa).

Lys10 is a catalytic residue. ATP is bound at residue 99–109 (PMGGGLGGGSS). Asp141 is an active-site residue.

This sequence belongs to the GHMP kinase family. IspE subfamily. In terms of assembly, homodimer.

It catalyses the reaction 4-CDP-2-C-methyl-D-erythritol + ATP = 4-CDP-2-C-methyl-D-erythritol 2-phosphate + ADP + H(+). The protein operates within isoprenoid biosynthesis; isopentenyl diphosphate biosynthesis via DXP pathway; isopentenyl diphosphate from 1-deoxy-D-xylulose 5-phosphate: step 3/6. Catalyzes the phosphorylation of the position 2 hydroxy group of 4-diphosphocytidyl-2C-methyl-D-erythritol. This Escherichia coli O7:K1 (strain IAI39 / ExPEC) protein is 4-diphosphocytidyl-2-C-methyl-D-erythritol kinase.